A 395-amino-acid chain; its full sequence is Ribonuclease D (395 aa).

The 3'-5' exonuclease domain occupies 14–181 (LITKSEDLAA…VYETLRDRLE (168 aa)). One can recognise an HRDC domain in the interval 219–300 (NRRYLGLLRA…AEARGLPDAD (82 aa)).

This sequence belongs to the RNase D family. Requires a divalent metal cation as cofactor.

Its subcellular location is the cytoplasm. The catalysed reaction is Exonucleolytic cleavage that removes extra residues from the 3'-terminus of tRNA to produce 5'-mononucleotides.. Its function is as follows. Exonuclease involved in the 3' processing of various precursor tRNAs. Initiates hydrolysis at the 3'-terminus of an RNA molecule and releases 5'-mononucleotides. In Granulibacter bethesdensis (strain ATCC BAA-1260 / CGDNIH1), this protein is Ribonuclease D.